Here is a 653-residue protein sequence, read N- to C-terminus: MAPGEKIKAKIKKNLPVKGPQAPTIKELMRWYCLNTNTHGCRRIVVSPGRLRRLLWIAFTLTAVGLIFWQCALLVFSFYTVSVSIKVHFQKLDFPAVTICNINPYKYSVVRDLLADLEQETRGALKSLYGFSEVKSRKQRDTESWSPAWEGVRPKFLNLVPLLIFNRDEKGKARDFLSLGRKRKISGNIIHKASNVVQVHESKKVVGFQLCPNDSSDCATYTFSSGINAIQEWYKLHYMNIMAQVPLEKKINMSYSAEELLVTCFFDGMSCDARNFTLFHHPMYGNCYTFNNRENETILSTSMGGSEYGLQVILYINEEEYNPFLVSATGAKVLIHRQDEYPFIEDVGTEIETAMSTSIGMHLTESFKLSEPYSQCTEDGSDVPIKNIYNAAYSLQICLYSCFQTKMVEKCGCAQYSQPLPPAANYCNYQQHPNWMYCYYQLYQAFVQEELGCQSVCKQSCSFKEWALTTSLAQWPSAVSEKWLLPVLTWDQGQQINKKLNKTDWAKLLIFYKDLNQRSIMESPANSIEMLLSNFGGQLGLWMSCSVVCVIEIIEVFFIDSLSIVTRRQWQKAKEWWARRKAAPSAEAPSGAQGQENPALEIDDDLPTFTSALSLPPAPGAQVPGTPPPRYNTLRLERTFSQQLADTRLPDEP.

Residues 1 to 55 (MAPGEKIKAKIKKNLPVKGPQAPTIKELMRWYCLNTNTHGCRRIVVSPGRLRRLL) lie on the Cytoplasmic side of the membrane. Residues 56 to 76 (WIAFTLTAVGLIFWQCALLVF) form a helical membrane-spanning segment. At 77 to 538 (SFYTVSVSIK…EMLLSNFGGQ (462 aa)) the chain is on the extracellular side. 8 disulfides stabilise this stretch: C100-C287, C211-C218, C264-C271, C376-C461, C398-C457, C402-C453, C411-C438, and C413-C427. The gating release of inhibition by proteolysis (GRIP); protease-sensitive region that is responsible for the proteolytic activation of the channel stretch occupies residues 137 to 225 (RKQRDTESWS…SDCATYTFSS (89 aa)). The N-linked (GlcNAc...) asparagine glycan is linked to N213. An N-linked (GlcNAc...) asparagine glycan is attached at N275. N501 is a glycosylation site (N-linked (GlcNAc...) asparagine). Residues 539–559 (LGLWMSCSVVCVIEIIEVFFI) traverse the membrane as a helical segment. Residues 560–653 (DSLSIVTRRQ…LADTRLPDEP (94 aa)) are Cytoplasmic-facing. A disordered region spans residues 582-632 (AAPSAEAPSGAQGQENPALEIDDDLPTFTSALSLPPAPGAQVPGTPPPRYN). The PY motif; recruits WW domain-containing proteins and is thereby required for ubiquitination and inhibition of the channel by NEDD4 and NEDD4L signature appears at 627 to 631 (PPPRY).

The protein belongs to the amiloride-sensitive sodium channel (TC 1.A.6) family. SCNN1G subfamily. As to quaternary structure, component of the heterotrimeric epithelial sodium channel (ENaC) composed of an alpha/SCNN1A, a beta/SCNN1B and a gamma/SCNN1G subunit. Interacts with WWP1 (via WW domains). Interacts with WWP2 (via WW domains); inhibits the channel. Interacts with the full-length immature form of PCSK9 (pro-PCSK9); inhibits ENaC by promoting its proteasomal degradation. Interacts with BPIFA1; the interaction is indirect via SCNN1B and inhibits the proteolytic maturation of SCNN1A and SCNN1G and the activation of ENaC. Phosphorylated on serine and threonine residues. Aldosterone and insulin increase the basal level of phosphorylation. Post-translationally, ubiquitinated. Can be ubiquitinated at multiple sites and undergo monoubiquitination and polyubiquitination. Ubiquitination by NEDD4 or NEDD4L inhibits the ENaC channel through endocytosis, intracellular retention and degradation of its individual subunits. In terms of processing, ENaC is activated through the proteolytic maturation of its subunits. Furin cleaves the SCNN1G subunit first, followed by cleavage by prostasin (PRSS8), which results in a stepwise increase in the open probability of the channel due to the release of an inhibitory tract. BPIFA1, which is recruited by the SCNN1B subunit, prevents the proteolytic activation of ENaC. N-glycosylated. N-linked glycans are processed to complex type during ENaC complex assembly and transport to the plasma membrane.

Its subcellular location is the apical cell membrane. The catalysed reaction is Na(+)(in) = Na(+)(out). With respect to regulation, originally identified and characterized by its inhibition by the diuretic drug amiloride. Functionally, this is one of the three pore-forming subunits of the heterotrimeric epithelial sodium channel (ENaC), a critical regulator of sodium balance and fluid homeostasis. ENaC operates in epithelial tissues, where it mediates the electrodiffusion of sodium ions from extracellular fluid through the apical membrane of cells, with water following osmotically. It plays a key role in maintaining sodium homeostasis through electrogenic sodium reabsorption in the kidneys. Additionally, ENaC is essential for airway surface liquid homeostasis, which is crucial for proper mucus clearance. In Oryctolagus cuniculus (Rabbit), this protein is Epithelial sodium channel subunit gamma.